A 290-amino-acid polypeptide reads, in one-letter code: 2-dehydropantoate 2-reductase (290 aa).

Residues 8 to 13 (GPGAVG), N98, and A124 contribute to the NADP(+) site. N98 contacts substrate. K175 serves as the catalytic Proton donor. N179 and S244 together coordinate substrate. NADP(+) is bound at residue E256.

It belongs to the ketopantoate reductase family.

The protein localises to the cytoplasm. The enzyme catalyses (R)-pantoate + NADP(+) = 2-dehydropantoate + NADPH + H(+). Its pathway is cofactor biosynthesis; (R)-pantothenate biosynthesis; (R)-pantoate from 3-methyl-2-oxobutanoate: step 2/2. Its function is as follows. Catalyzes the NADPH-dependent reduction of ketopantoate into pantoic acid. The chain is 2-dehydropantoate 2-reductase from Caulobacter vibrioides (strain ATCC 19089 / CIP 103742 / CB 15) (Caulobacter crescentus).